The chain runs to 798 residues: General transcription and DNA repair factor IIH helicase/translocase subunit XPB (798 aa).

2 disordered regions span residues 1-62 (MGPP…EQIN) and 235-254 (PPGA…GADG). Positions 6–22 (KSRKDRSGGDKFGKKRR) match the Nuclear localization signal motif. Residues 10–25 (DRSGGDKFGKKRRAED) show a composition bias toward basic and acidic residues. The span at 33–42 (DDNDSLDATE) shows a compositional bias: acidic residues. The region spanning 343-504 (MFGNGRARSG…DLNFLIGPKL (162 aa)) is the Helicase ATP-binding domain. ATP is bound at residue 360 to 367 (AGKSLVGV). Positions 457–460 (DEVH) match the DEVH box motif. The Helicase C-terminal domain maps to 558–713 (RSCQFLIKYH…KVITHLKGMD (156 aa)). Residues 746–765 (LPGEPGYRPSGSGGAVRRVG) are disordered.

Belongs to the helicase family. RAD25/XPB subfamily. Component of the 7-subunit TFIIH core complex composed of haywire/XPB/ERCC3, XPD/ERCC2, GTF2H1, GTF2H2, GTF2H3, GTF2H4 and GTF2H5, which is active in NER. The core complex associates with the 3-subunit CDK-activating kinase (CAK) module composed of CCNH/cyclin H, CDK7 and MNAT1 to form the 10-subunit holoenzyme (holo-TFIIH) active in transcription. Interacts with PUF60. Interacts with ATF7IP. Interacts with Epstein-Barr virus EBNA2.

Its subcellular location is the nucleus. It catalyses the reaction Couples ATP hydrolysis with the unwinding of duplex DNA by translocating in the 3'-5' direction.. The catalysed reaction is ATP + H2O = ADP + phosphate + H(+). In terms of biological role, ATP-dependent 3'-5' DNA helicase/translocase; binds dsDNA rather than ssDNA, unzipping it in a translocase rather than classical helicase activity. Component of the general transcription and DNA repair factor IIH (TFIIH) core complex. When complexed to CDK-activating kinase (CAK), involved in RNA transcription by RNA polymerase II. The ATPase activity of XPB/ERCC3, but not its helicase activity, is required for DNA opening; it may wrap around the damaged DNA wedging it open, causing localized melting and twisting that allows XPD/ERCC2 helicase to anchor. The ATP-dependent helicase activity of XPB/ERCC3 may be required for promoter escape. Also involved in transcription-coupled nucleotide excision repair (NER) of damaged DNA. In NER, TFIIH acts by opening DNA around the lesion to allow the excision of the damaged oligonucleotide and its replacement by a new DNA fragment. The structure of the TFIIH transcription complex differs from the NER-TFIIH complex; large movements by XPD/ERCC2 and XPB/ERCC3 are stabilized by XPA. The sequence is that of General transcription and DNA repair factor IIH helicase/translocase subunit XPB (hay) from Drosophila melanogaster (Fruit fly).